The sequence spans 323 residues: Mas-related G-protein coupled receptor member X1 (323 aa).

Topologically, residues 1–30 (MDPTISSLSTESTTLNKTGHPSCRPILTLS) are extracellular. Asn16 carries N-linked (GlcNAc...) asparagine glycosylation. The helical transmembrane segment at 31 to 51 (FLVPIITLLGLAGNTIVLWLL) threads the bilayer. Residues 52–59 (GFRMRRKA) lie on the Cytoplasmic side of the membrane. The chain crosses the membrane as a helical span at residues 60 to 80 (ISVYVLNLSLADSFFLCCHFI). The Extracellular portion of the chain corresponds to 81-100 (DSLMRIMNFYGIYAHKLSKE). Residues 101–121 (ILGNAAIIPYISGLSILSAIS) form a helical membrane-spanning segment. The Cytoplasmic segment spans residues 122 to 143 (TERCLSVLWPIWYHCHRPRNMS). Residues 144 to 164 (AIICVLIWVLSFLMGILDWFF) traverse the membrane as a helical segment. Residues 165-180 (SGFLGETHHHLWKNVD) are Extracellular-facing. Residues 181–201 (FIVTAFLIFLFMLLFGSSLAL) traverse the membrane as a helical segment. Topologically, residues 202-226 (LVRILCGSRRKPLSRLYVTISLTVM) are cytoplasmic. The helical transmembrane segment at 227 to 247 (VYLICGLPLGLYLFLLYWFGI) threads the bilayer. Topologically, residues 248–258 (HLHYPFCHIYQ) are extracellular. Residues 259–279 (VTVLLSCVNSSANPIIYFLVG) form a helical membrane-spanning segment. Over 280–323 (SFRHRKKHRSLKMVLKRALEETPEEDEYTDSHVQKPTEISERRC) the chain is Cytoplasmic.

The protein belongs to the G-protein coupled receptor 1 family. Mas subfamily. As to expression, uniquely localized in a subset of small dorsal root and trigeminal sensory neurons. Associated preferentially with IB4 class of small-diameter somatosensory afferents (also known as nociceptors).

The protein resides in the cell membrane. Its function is as follows. Orphan receptor activated by neuropeptides terminating in Arg-Phe or Arg-Phe-amide. Mediates its action by association with G proteins that activate a phosphatidylinositol-calcium second messenger system. Its effect is mediated by G(q) and G(11) proteins. May regulate the function of nociceptive neurons by modulation of pain perception. The polypeptide is Mas-related G-protein coupled receptor member X1 (Mrgprx1) (Rattus norvegicus (Rat)).